The following is a 271-amino-acid chain: 2,3,4,5-tetrahydropyridine-2,6-dicarboxylate N-succinyltransferase (271 aa).

Positions 102 and 139 each coordinate substrate.

Belongs to the transferase hexapeptide repeat family. As to quaternary structure, homotrimer.

It is found in the cytoplasm. The catalysed reaction is (S)-2,3,4,5-tetrahydrodipicolinate + succinyl-CoA + H2O = (S)-2-succinylamino-6-oxoheptanedioate + CoA. It functions in the pathway amino-acid biosynthesis; L-lysine biosynthesis via DAP pathway; LL-2,6-diaminopimelate from (S)-tetrahydrodipicolinate (succinylase route): step 1/3. In Coxiella burnetii (strain Dugway 5J108-111), this protein is 2,3,4,5-tetrahydropyridine-2,6-dicarboxylate N-succinyltransferase.